The chain runs to 299 residues: tRNA-cytidine(32) 2-sulfurtransferase (299 aa).

A PP-loop motif motif is present at residues 56–61; the sequence is SGGKDS. Positions 131, 134, and 222 each coordinate [4Fe-4S] cluster.

Belongs to the TtcA family. In terms of assembly, homodimer. The cofactor is Mg(2+). [4Fe-4S] cluster serves as cofactor.

The protein localises to the cytoplasm. The catalysed reaction is cytidine(32) in tRNA + S-sulfanyl-L-cysteinyl-[cysteine desulfurase] + AH2 + ATP = 2-thiocytidine(32) in tRNA + L-cysteinyl-[cysteine desulfurase] + A + AMP + diphosphate + H(+). It functions in the pathway tRNA modification. Functionally, catalyzes the ATP-dependent 2-thiolation of cytidine in position 32 of tRNA, to form 2-thiocytidine (s(2)C32). The sulfur atoms are provided by the cysteine/cysteine desulfurase (IscS) system. This chain is tRNA-cytidine(32) 2-sulfurtransferase, found in Xylella fastidiosa (strain M23).